Consider the following 262-residue polypeptide: Abhydrolase domain-containing protein ACTT2-1 (262 aa).

The Peroxisomal targeting signal type 1 signature appears at serine 260–leucine 262.

It belongs to the AB hydrolase superfamily. AKT2 hydrolase family.

The protein resides in the peroxisome. Its pathway is mycotoxin biosynthesis. Abhydrolase domain-containing protein; part of the gene clusters that mediate the biosynthesis of the host-selective toxins (HSTs) ACT-toxins responsible for brown spot of tangerine disease by the tangerine pathotype which affects tangerines and mandarins. ACT-toxins consist of three moieties, 9,10-epoxy-8-hydroxy-9-methyl-decatrienoic acid (EDA), valine and a polyketide. ACT-toxin I is toxic to both citrus and pear; toxin II the 5''-deoxy derivative of ACT-toxin I, is highly toxic to pear and slightly toxic to citrus. On cellular level, ACT-toxins affect plasma membrane of susceptible cells and cause a sudden increase in loss of K(+) after a few minutes of toxin treatment. The acyl-CoA ligase ACTT1, the hydrolase ACTT2, the enoyl-CoA hydratases ACTT3 and ACTT6, and the acyl-CoA synthetase ACTT5 are all involved in the biosynthesis of the AK-, AF- and ACT-toxin common 9,10-epoxy-8-hydroxy-9-methyl-decatrienoic acid (EDA) structural moiety. The exact role of each enzyme, and of additional enzymes identified within the AF-toxin clusters have still to be determined. On the other hand, ACTTS1 to ACTTS4 are specific to the tangerine pathotype. The function of ACTTS3 is to elongate the polyketide chain portion of ACT-toxin that is unique to this toxin. The enoyl-reductase ACTTS2 might complement the missing enoyl-reductase (ER) domain in ACTTS3 in the synthesis of the polyketide portion of ACT-toxin. The roles of the nonribosomal peptide synthetases-related proteins ACTTS1 and ACTTS4 have also still not been elucidated. This chain is Abhydrolase domain-containing protein ACTT2-1, found in Alternaria alternata (Alternaria rot fungus).